A 155-amino-acid polypeptide reads, in one-letter code: DNA-directed RNA polymerase II subunit rpb4 (155 aa).

Belongs to the eukaryotic RPB4 RNA polymerase subunit family. As to quaternary structure, component of the RNA polymerase II (Pol II) complex consisting of 12 subunits. RPB4 and RPB7 form a subcomplex that protrudes from the 10-subunit Pol II core complex.

It is found in the nucleus. In terms of biological role, DNA-dependent RNA polymerase catalyzes the transcription of DNA into RNA using the four ribonucleoside triphosphates as substrates. Component of RNA polymerase II which synthesizes mRNA precursors and many functional non-coding RNAs. Pol II is the central component of the basal RNA polymerase II transcription machinery. It is composed of mobile elements that move relative to each other. RPB4 is part of a subcomplex with RPB7 that binds to a pocket formed by RPB1, RPB2 and RPB6 at the base of the clamp element. The RPB4-RPB7 subcomplex seems to lock the clamp via RPB7 in the closed conformation thus preventing double-stranded DNA to enter the active site cleft. The RPB4-RPB7 subcomplex binds single-stranded DNA and RNA. The sequence is that of DNA-directed RNA polymerase II subunit rpb4 (polr2d) from Dictyostelium discoideum (Social amoeba).